The primary structure comprises 222 residues: 6,7-dimethyl-8-ribityllumazine synthase, chloroplastic (222 aa).

Residues 1–66 constitute a chloroplast transit peptide; the sequence is MASFAASQTC…NRASFVVTNA (66 aa). Residues Phe89, 122-124, and 146-148 contribute to the 5-amino-6-(D-ribitylamino)uracil site; these read AYE and AVV. A (2S)-2-hydroxy-3-oxobutyl phosphate-binding site is contributed by 151 to 152; sequence DT. Residue His154 is the Proton donor of the active site. Phe179 lines the 5-amino-6-(D-ribitylamino)uracil pocket. Arg193 serves as a coordination point for (2S)-2-hydroxy-3-oxobutyl phosphate.

The protein belongs to the DMRL synthase family. As to quaternary structure, oligomer forming an icosahedral capsid.

Its subcellular location is the plastid. It is found in the chloroplast. It catalyses the reaction (2S)-2-hydroxy-3-oxobutyl phosphate + 5-amino-6-(D-ribitylamino)uracil = 6,7-dimethyl-8-(1-D-ribityl)lumazine + phosphate + 2 H2O + H(+). The protein operates within cofactor biosynthesis; riboflavin biosynthesis; riboflavin from 2-hydroxy-3-oxobutyl phosphate and 5-amino-6-(D-ribitylamino)uracil: step 1/2. Its function is as follows. Catalyzes the formation of 6,7-dimethyl-8-ribityllumazine by condensation of 5-amino-6-(D-ribitylamino)uracil with 3,4-dihydroxy-2-butanone 4-phosphate. This is the penultimate step in the biosynthesis of riboflavin. This Spinacia oleracea (Spinach) protein is 6,7-dimethyl-8-ribityllumazine synthase, chloroplastic.